A 173-amino-acid chain; its full sequence is Glutamyl-tRNA(Gln) amidotransferase subunit F, mitochondrial (173 aa).

The N-terminal 15 residues, 1-15 (MSRFMIRAVFFRRYT), are a transit peptide targeting the mitochondrion.

Belongs to the GatF family. Subunit of the heterotrimeric GatFAB amidotransferase (AdT) complex, composed of A, B and F subunits.

The protein localises to the mitochondrion inner membrane. The catalysed reaction is L-glutamyl-tRNA(Gln) + L-glutamine + ATP + H2O = L-glutaminyl-tRNA(Gln) + L-glutamate + ADP + phosphate + H(+). Allows the formation of correctly charged Gln-tRNA(Gln) through the transamidation of misacylated Glu-tRNA(Gln) in the mitochondria. The reaction takes place in the presence of glutamine and ATP through an activated gamma-phospho-Glu-tRNA(Gln). Required for proper protein synthesis within the mitochondrion. The chain is Glutamyl-tRNA(Gln) amidotransferase subunit F, mitochondrial from Candida glabrata (strain ATCC 2001 / BCRC 20586 / JCM 3761 / NBRC 0622 / NRRL Y-65 / CBS 138) (Yeast).